We begin with the raw amino-acid sequence, 329 residues long: Bifunctional muramidase/DL-endopeptidase CwlT (329 aa).

The N-terminal stretch at Met1 to Thr29 is a signal peptide. Positions Arg59–Val192 are muramidase. A NlpC/P60 domain is found at Met206–Lys329. Cys237 serves as the catalytic Nucleophile. The active-site Proton acceptor is His290. Residue Asn302 is part of the active site.

Belongs to the peptidase C40 family.

It is found in the secreted. It catalyses the reaction Hydrolysis of (1-&gt;4)-beta-linkages between N-acetylmuramic acid and N-acetyl-D-glucosamine residues in a peptidoglycan and between N-acetyl-D-glucosamine residues in chitodextrins.. Functionally, exhibits both muramidase and DL-endopeptidase activities. The N-terminal region acts as a N-acetylmuramidase, which cleaves the bond between N-acetylmuramic acid and N-acetyl-D-glucosamine (MurNAc-GlcNAc) in peptidoglycan. The C-terminal region acts as a DL-endopeptidase that cleaves the bond between D-gamma-glutamate and meso-diaminopimelic acid. Cannot degrade purified B.anthracis peptidoglycan, which differ from those of B.subtilis. CwlT is required for ICEBs1 conjugation: the muramidase activity is essential, whereas the peptidase activity is partially dispensable for transfer of ICEBs1. The protein is Bifunctional muramidase/DL-endopeptidase CwlT of Bacillus subtilis (strain 168).